Reading from the N-terminus, the 89-residue chain is Dynein light chain 2, cytoplasmic (89 aa).

This sequence belongs to the dynein light chain family.

It is found in the cytoplasm. The protein resides in the cytoskeleton. Its function is as follows. Acts as a non-catalytic accessory component of a dynein complex. The polypeptide is Dynein light chain 2, cytoplasmic (Cdlc2) (Drosophila melanogaster (Fruit fly)).